Here is a 203-residue protein sequence, read N- to C-terminus: MSRYTGPSWKQSRRLGLSLTGTGKELARRNYVPGQHGPNNRSKLSEYGLQLAEKQKLRFSYGLGEKQFRNLFVQATKAKEGTLGFNFMVLLERRLDNVVYRLGLATTRRQARQFVNHGHILVDGKRVDIPSYRVTPGQVISVREKSMKVPAILEAVEATLGRPAFVSFDAEKLEGSLTRLPERDEINPEINEALVVEFYNKML.

Positions 93–156 constitute an S4 RNA-binding domain; it reads RRLDNVVYRL…MKVPAILEAV (64 aa).

Belongs to the universal ribosomal protein uS4 family. Part of the 30S ribosomal subunit. Contacts protein S5. The interaction surface between S4 and S5 is involved in control of translational fidelity.

One of the primary rRNA binding proteins, it binds directly to 16S rRNA where it nucleates assembly of the body of the 30S subunit. In terms of biological role, with S5 and S12 plays an important role in translational accuracy. In Streptococcus agalactiae serotype Ia (strain ATCC 27591 / A909 / CDC SS700), this protein is Small ribosomal subunit protein uS4.